Reading from the N-terminus, the 848-residue chain is Adenylate cyclase (848 aa).

The tract at residues 1 to 535 is catalytic; that stretch reads MYLYIETLKQ…DVSHHFPLRL (535 aa). Residues 541–848 form a regulatory region; the sequence is KALYSPCEIR…DTPLLQQYFS (308 aa). At His-609 the chain carries Phosphohistidine; by CRR.

The protein belongs to the adenylyl cyclase class-1 family.

It is found in the cytoplasm. The catalysed reaction is ATP = 3',5'-cyclic AMP + diphosphate. The regulatory domain is involved in the regulation of cyclase activity by the carbon source. Activated by the PTS system, glucose-specific IIA component (CRR). In terms of biological role, catalyzes the formation of the second messenger cAMP from ATP. Its transcript is probably degraded by endoribonuclease LS (rnlA), decreasing cAMP levels and the negative regulator Crp-cAMP, which then induces its own transcription again. This Escherichia coli (strain K12) protein is Adenylate cyclase (cyaA).